A 392-amino-acid chain; its full sequence is Chaperone protein DnaJ (392 aa).

A J domain is found at 2–67; it reads DYYDVLGVSK…QKRESYDRYG (66 aa). A CR-type zinc finger spans residues 149 to 227; it reads GVEKELLVSG…CRGQGRIKDK (79 aa). Residues C162, C165, C179, C182, C201, C204, C215, and C218 each coordinate Zn(2+). CXXCXGXG motif repeat units follow at residues 162-169, 179-186, 201-208, and 215-222; these read CETCLGSG, CDRCKGSG, CPECGGEG, and CSNCRGQG.

The protein belongs to the DnaJ family. In terms of assembly, homodimer. Requires Zn(2+) as cofactor.

The protein resides in the cytoplasm. In terms of biological role, participates actively in the response to hyperosmotic and heat shock by preventing the aggregation of stress-denatured proteins and by disaggregating proteins, also in an autonomous, DnaK-independent fashion. Unfolded proteins bind initially to DnaJ; upon interaction with the DnaJ-bound protein, DnaK hydrolyzes its bound ATP, resulting in the formation of a stable complex. GrpE releases ADP from DnaK; ATP binding to DnaK triggers the release of the substrate protein, thus completing the reaction cycle. Several rounds of ATP-dependent interactions between DnaJ, DnaK and GrpE are required for fully efficient folding. Also involved, together with DnaK and GrpE, in the DNA replication of plasmids through activation of initiation proteins. This chain is Chaperone protein DnaJ, found in Chlamydia caviae (strain ATCC VR-813 / DSM 19441 / 03DC25 / GPIC) (Chlamydophila caviae).